Consider the following 339-residue polypeptide: Replication factor C subunit 2 (339 aa).

48–55 (YGPPGTGK) is a binding site for ATP.

The protein belongs to the activator 1 small subunits family. As to quaternary structure, heterotetramer of subunits RFC2, RFC3, RFC4 and RFC5 that can form a complex with RFC1. Expressed in roots, leaves, shoot apical meristem (SAM), flag leaves and panicles.

It localises to the nucleus. Functionally, may be involved in DNA replication and thus regulate cell proliferation. This Oryza sativa subsp. japonica (Rice) protein is Replication factor C subunit 2 (RFC2).